The primary structure comprises 403 residues: F-box protein At1g60400 (403 aa).

One can recognise an F-box domain in the interval 13 to 59; that stretch reads IDRLSALPEHLLCRILSELSTKDSVRTSVLSKHWRNLWLHVPVLELE.

In Arabidopsis thaliana (Mouse-ear cress), this protein is F-box protein At1g60400.